Here is a 343-residue protein sequence, read N- to C-terminus: Methylthioribose-1-phosphate isomerase (343 aa).

Substrate is bound by residues 48–50 (RGA), Arg-88, and Gln-193. Asp-234 serves as the catalytic Proton donor. 244–245 (NK) contacts substrate.

It belongs to the eIF-2B alpha/beta/delta subunits family. MtnA subfamily.

It carries out the reaction 5-(methylsulfanyl)-alpha-D-ribose 1-phosphate = 5-(methylsulfanyl)-D-ribulose 1-phosphate. It functions in the pathway amino-acid biosynthesis; L-methionine biosynthesis via salvage pathway; L-methionine from S-methyl-5-thio-alpha-D-ribose 1-phosphate: step 1/6. Its function is as follows. Catalyzes the interconversion of methylthioribose-1-phosphate (MTR-1-P) into methylthioribulose-1-phosphate (MTRu-1-P). This chain is Methylthioribose-1-phosphate isomerase, found in Thermotoga petrophila (strain ATCC BAA-488 / DSM 13995 / JCM 10881 / RKU-1).